The primary structure comprises 368 residues: MALHRLKGHGANVGNRVGIQLDKDFVLFQGSEQEALAVYLSGILSLRLKETTTIKYIRLHLRGVRRVSSDTQSSLPARTGRKRFCSENEFYSRTWNFFDGYREAPMTVPAGEYKYPFDVVMEGSLPASVEGMKEASISYLFTVEIGRRHGRDITFDKPLRVIRVPDLEPCSHDFALDEVWANKIAYRIGIQNRTVALGTRIDVDYVFAPLLRDMKIAFIESQLLEVRDLSVEPNDGGSAHAARTETIVCSDRYTLGEEYSSKALESYQFSRTLQLPQALGHCVQDTEDMGVRVSHKLKIHVRMHNPDGHESELRLAIPVLIYLSPYYRVWEDSFCGETIPLPETLNPSDECPPAYGMHELDQLYMPQD.

The protein belongs to the arrestin family. Interacts with hulA.

Its function is as follows. May be involved in signaling by recognizing appropriately phosphorylated substrates via its arrestin domains and then recruit a HECT-type ubiquitin ligase such as hulA, leading to ubiquitination of the substrate, providing a link between ubiquitination and phosphorylation in protein regulation and stability. The polypeptide is HECT-type ubiquitin ligase-interacting protein apyA (apyA) (Emericella nidulans (strain FGSC A4 / ATCC 38163 / CBS 112.46 / NRRL 194 / M139) (Aspergillus nidulans)).